The sequence spans 227 residues: Response regulator protein TodT (227 aa).

The 115-residue stretch at 28–142 (VIYILDDDNA…ELLGAIRAAL (115 aa)) folds into the Response regulatory domain. Asp77 bears the 4-aspartylphosphate mark. In terms of domain architecture, HTH luxR-type spans 158-223 (LKENYESLSK…DLVRVTERLK (66 aa)). The segment at residues 182 to 201 (NKQTALELDISEATVKVHRH) is a DNA-binding region (H-T-H motif).

Phosphorylated by TodS.

The protein localises to the cytoplasm. Functionally, member of the two-component regulatory system TodS/TodT involved in the regulation of toluene degradation. Phosphorylated TodT activates transcription of the tod operon (todXFC1C2BADEGIH). Binds specifically to a 6-bp palindromic DNA structure in the tod promoter region. The protein is Response regulator protein TodT (todT) of Pseudomonas putida (strain ATCC 700007 / DSM 6899 / JCM 31910 / BCRC 17059 / LMG 24140 / F1).